The following is a 474-amino-acid chain: Glutamyl-tRNA(Gln) amidotransferase subunit A (474 aa).

Residues K76 and S151 each act as charge relay system in the active site. S175 (acyl-ester intermediate) is an active-site residue.

The protein belongs to the amidase family. GatA subfamily. Heterotrimer of A, B and C subunits.

The enzyme catalyses L-glutamyl-tRNA(Gln) + L-glutamine + ATP + H2O = L-glutaminyl-tRNA(Gln) + L-glutamate + ADP + phosphate + H(+). Its function is as follows. Allows the formation of correctly charged Gln-tRNA(Gln) through the transamidation of misacylated Glu-tRNA(Gln) in organisms which lack glutaminyl-tRNA synthetase. The reaction takes place in the presence of glutamine and ATP through an activated gamma-phospho-Glu-tRNA(Gln). The polypeptide is Glutamyl-tRNA(Gln) amidotransferase subunit A (Chlorobium chlorochromatii (strain CaD3)).